The primary structure comprises 196 residues: Large ribosomal subunit protein bL25 (196 aa).

Belongs to the bacterial ribosomal protein bL25 family. CTC subfamily. As to quaternary structure, part of the 50S ribosomal subunit; part of the 5S rRNA/L5/L18/L25 subcomplex. Contacts the 5S rRNA. Binds to the 5S rRNA independently of L5 and L18.

This is one of the proteins that binds to the 5S RNA in the ribosome where it forms part of the central protuberance. This is Large ribosomal subunit protein bL25 from Geotalea daltonii (strain DSM 22248 / JCM 15807 / FRC-32) (Geobacter daltonii).